Reading from the N-terminus, the 344-residue chain is Dihydroorotase (344 aa).

Residues His-14 and His-16 each coordinate Zn(2+). Substrate contacts are provided by residues 16–18 (HLR) and Asn-42. Positions 100, 137, and 175 each coordinate Zn(2+). At Lys-100 the chain carries N6-carboxylysine. Residue His-137 participates in substrate binding. Leu-220 lines the substrate pocket. Asp-248 serves as a coordination point for Zn(2+). The active site involves Asp-248. The substrate site is built by His-252 and Ala-264.

Belongs to the metallo-dependent hydrolases superfamily. DHOase family. Class II DHOase subfamily. Homodimer. Requires Zn(2+) as cofactor.

It catalyses the reaction (S)-dihydroorotate + H2O = N-carbamoyl-L-aspartate + H(+). Its pathway is pyrimidine metabolism; UMP biosynthesis via de novo pathway; (S)-dihydroorotate from bicarbonate: step 3/3. In terms of biological role, catalyzes the reversible cyclization of carbamoyl aspartate to dihydroorotate. This is Dihydroorotase from Cupriavidus taiwanensis (strain DSM 17343 / BCRC 17206 / CCUG 44338 / CIP 107171 / LMG 19424 / R1) (Ralstonia taiwanensis (strain LMG 19424)).